The following is an 89-amino-acid chain: Small ribosomal subunit protein uS15 (89 aa).

It belongs to the universal ribosomal protein uS15 family. In terms of assembly, part of the 30S ribosomal subunit. Forms a bridge to the 50S subunit in the 70S ribosome, contacting the 23S rRNA.

Its function is as follows. One of the primary rRNA binding proteins, it binds directly to 16S rRNA where it helps nucleate assembly of the platform of the 30S subunit by binding and bridging several RNA helices of the 16S rRNA. Functionally, forms an intersubunit bridge (bridge B4) with the 23S rRNA of the 50S subunit in the ribosome. The sequence is that of Small ribosomal subunit protein uS15 from Crocosphaera subtropica (strain ATCC 51142 / BH68) (Cyanothece sp. (strain ATCC 51142)).